The primary structure comprises 63 residues: Small ribosomal subunit protein bS21 (63 aa).

Belongs to the bacterial ribosomal protein bS21 family.

The polypeptide is Small ribosomal subunit protein bS21 (Parabacteroides distasonis (strain ATCC 8503 / DSM 20701 / CIP 104284 / JCM 5825 / NCTC 11152)).